A 172-amino-acid chain; its full sequence is Capsid protein (172 aa).

The tract at residues 1–26 (MASKWNWSGTKGRRTPRRPYGRPYKS) is disordered. A compositionally biased stretch (basic residues) spans 11–20 (KGRRTPRRPY).

Belongs to the nanoviridae capsid protein family.

The protein localises to the virion. This is Capsid protein (DNA-S) from Faba bean necrotic yellows virus (isolate Syrian SV292-88) (FBNYV).